The following is a 189-amino-acid chain: Tumor protein p53-inducible protein 11 (189 aa).

Topologically, residues 1–63 (MAAKQPPPLM…FAVREPLGLR (63 aa)) are cytoplasmic. Residue Ser-14 is modified to Phosphoserine. A helical transmembrane segment spans residues 64–84 (VWQFLSAMLFSSVAIMALALP). Residues 85-108 (DQLYDAVFDGAEVTSKTPIRLYGG) are Extracellular-facing. Residues 109 to 129 (ALLSISLIMWNALYTAEKVII) traverse the membrane as a helical segment. Arg-130 is a topological domain (cytoplasmic). A helical transmembrane segment spans residues 131–151 (WTLLTEACYFGVQSLVVTATL). The Extracellular segment spans residues 152 to 155 (AETG). Residues 156 to 176 (LMSLGTLLLLASRLLFVIVSI) traverse the membrane as a helical segment. Residues 177–189 (YYYYQVGRKPKKV) are Cytoplasmic-facing.

It localises to the membrane. This chain is Tumor protein p53-inducible protein 11 (Tp53i11), found in Rattus norvegicus (Rat).